The following is a 201-amino-acid chain: Dephospho-CoA kinase (201 aa).

The 198-residue stretch at 4–201 folds into the DPCK domain; the sequence is IIGITGGIAS…LEGGRQDDRD (198 aa). 12 to 17 is an ATP binding site; the sequence is ASGKST.

The protein belongs to the CoaE family.

The protein localises to the cytoplasm. The catalysed reaction is 3'-dephospho-CoA + ATP = ADP + CoA + H(+). It participates in cofactor biosynthesis; coenzyme A biosynthesis; CoA from (R)-pantothenate: step 5/5. Functionally, catalyzes the phosphorylation of the 3'-hydroxyl group of dephosphocoenzyme A to form coenzyme A. This chain is Dephospho-CoA kinase, found in Streptococcus pneumoniae serotype 4 (strain ATCC BAA-334 / TIGR4).